Here is a 150-residue protein sequence, read N- to C-terminus: Large ribosomal subunit protein bL9 (150 aa).

The protein belongs to the bacterial ribosomal protein bL9 family.

In terms of biological role, binds to the 23S rRNA. The chain is Large ribosomal subunit protein bL9 from Desulforudis audaxviator (strain MP104C).